The primary structure comprises 255 residues: tRNA pseudouridine synthase A (255 aa).

Aspartate 52 (nucleophile) is an active-site residue. Substrate is bound at residue tyrosine 111.

The protein belongs to the tRNA pseudouridine synthase TruA family. Homodimer.

The enzyme catalyses uridine(38/39/40) in tRNA = pseudouridine(38/39/40) in tRNA. Functionally, formation of pseudouridine at positions 38, 39 and 40 in the anticodon stem and loop of transfer RNAs. This chain is tRNA pseudouridine synthase A, found in Cereibacter sphaeroides (strain ATCC 17029 / ATH 2.4.9) (Rhodobacter sphaeroides).